Consider the following 210-residue polypeptide: Keratin-associated protein 26-1 (210 aa).

The protein belongs to the PMG family. Interacts with hair keratins. Localized high up in the well differentiated portion of the hair follicle cuticle (about 10-15 cell layers above the apex of the dermal papilla).

In the hair cortex, hair keratin intermediate filaments are embedded in an interfilamentous matrix, consisting of hair keratin-associated proteins (KRTAP), which are essential for the formation of a rigid and resistant hair shaft through their extensive disulfide bond cross-linking with abundant cysteine residues of hair keratins. The matrix proteins include the high-sulfur and high-glycine-tyrosine keratins. The sequence is that of Keratin-associated protein 26-1 (KRTAP26-1) from Homo sapiens (Human).